A 956-amino-acid polypeptide reads, in one-letter code: MADPAECSIKVMCRFRPLNEAEILRGDKFIPKFKGEETVVIGQGKPYVFDRVLPPNTTQEQVYNACAKQIVKDVLEGYNGTIFAYGQTSSGKTHTMEGKLHDPQLMGIIPRIAHDIFDHIYSMDENLEFHIKVSYFEIYLDKIRDLLDVSKTNLAVHEDKNRVPYVKGCTERFVSSPEEVMDVIDEGKANRHVAVTNMNEHSSRSHSIFLINIKQENVETEKKLSGKLYLVDLAGSEKVSKTGAEGAVLDEAKNINKSLSALGNVISALAEGTKTHVPYRDSKMTRILQDSLGGNCRTTIVICCSPSVFNEAETKSTLMFGQRAKTIKNTVSVNLELTAEEWKKKYEKEKEKNKALKSVLQHLEMELNRWRNGEAVPEDEQISAKDQKSLEPCDNTPIIDNITPVVDGISAEKEKYDEEITSLYRQLDDKDDEINQQSQLAEKLKQQMLDQDELLASTRRDYEKIQEELTRLQIENEAAKDEVKEVLQALEELAVNYDQKSQEVEDKTRANEQLTDELAQKTTTLTTTQRELSQLQELSNHQKKRATEILNLLLKDLGEIGGIIGTNDVKTLADVNGVIEEEFTMARLYISKMKSEVKSLVNRSKQLESAQMDSNRKMNASERELAACQLLISQHEAKIKSLTDYMQNMEQKRRQLEESQDSLSEELAKLRAQEKMHEVSFQDKEKEHLTRLQDAEEVKKALEQQMESHREAHQKQLSRLRDEIEEKQRIIDEIRDLNQKLQLEQERLSSDYNKLKIEDQEREVKLEKLLLLNDKREQAREDLKGLEETVSRELQTLHNLRKLFVQDLTTRVKKSVELDSDDGGGSAAQKQKISFLENNLEQLTKVHKQLVRDNADLRCELPKLEKRLRATAERVKALESALKEAKENAMRDRKRYQQEVDRIKEAVRAKNMARRAHSAQIAKPIRPGHYPASSPTAVHAVRGGGGGSSNSTHYQK.

The Kinesin motor domain maps to serine 8 to isoleucine 327. The ATP site is built by glutamine 87, serine 89, serine 90, glycine 91, lysine 92, threonine 93, histidine 94, and lysine 99. Residues valine 174–lysine 315 form a microtubule-binding region. Position 403 is a phosphothreonine (threonine 403). The stretch at valine 406–lysine 923 forms a coiled coil. Residues cysteine 859–lysine 956 form a globular region. The disordered stretch occupies residues lysine 910–lysine 956.

It belongs to the TRAFAC class myosin-kinesin ATPase superfamily. Kinesin family. Kinesin subfamily. Oligomer composed of two heavy chains and two light chains. Interacts with GRIP1. Interacts with KLC3 and TRAK1. Interacts with ZFYVE27.

The protein resides in the cytoplasm. Its subcellular location is the cytoskeleton. It is found in the cell projection. The protein localises to the dendrite. It catalyses the reaction ATP + H2O = ADP + phosphate + H(+). Functionally, microtubule-associated force-producing protein that may play a role in organelle transport. Has ATPase activity. Involved in synaptic transmission. Mediates dendritic trafficking of mRNAs. Required for anterograde axonal transportation of MAPK8IP3/JIP3 which is essential for MAPK8IP3/JIP3 function in axon elongation. The chain is Kinesin heavy chain isoform 5C (Kif5c) from Mus musculus (Mouse).